Reading from the N-terminus, the 260-residue chain is Triosephosphate isomerase (260 aa).

11-13 lines the substrate pocket; it reads NWK. Catalysis depends on H103, which acts as the Electrophile. E175 acts as the Proton acceptor in catalysis. Substrate contacts are provided by residues G181, S220, and 241 to 242; that span reads GG.

The protein belongs to the triosephosphate isomerase family. As to quaternary structure, homodimer.

The protein resides in the cytoplasm. The catalysed reaction is D-glyceraldehyde 3-phosphate = dihydroxyacetone phosphate. It participates in carbohydrate biosynthesis; gluconeogenesis. The protein operates within carbohydrate degradation; glycolysis; D-glyceraldehyde 3-phosphate from glycerone phosphate: step 1/1. Its function is as follows. Involved in the gluconeogenesis. Catalyzes stereospecifically the conversion of dihydroxyacetone phosphate (DHAP) to D-glyceraldehyde-3-phosphate (G3P). In Shewanella halifaxensis (strain HAW-EB4), this protein is Triosephosphate isomerase.